The primary structure comprises 327 residues: Phenylalanine--tRNA ligase alpha subunit (327 aa).

Glutamate 252 provides a ligand contact to Mg(2+).

It belongs to the class-II aminoacyl-tRNA synthetase family. Phe-tRNA synthetase alpha subunit type 1 subfamily. Tetramer of two alpha and two beta subunits. Mg(2+) is required as a cofactor.

The protein resides in the cytoplasm. It carries out the reaction tRNA(Phe) + L-phenylalanine + ATP = L-phenylalanyl-tRNA(Phe) + AMP + diphosphate + H(+). This is Phenylalanine--tRNA ligase alpha subunit from Haemophilus ducreyi (strain 35000HP / ATCC 700724).